Here is a 118-residue protein sequence, read N- to C-terminus: Large ribosomal subunit protein bL20 (118 aa).

Belongs to the bacterial ribosomal protein bL20 family.

Binds directly to 23S ribosomal RNA and is necessary for the in vitro assembly process of the 50S ribosomal subunit. It is not involved in the protein synthesizing functions of that subunit. In Desulfotalea psychrophila (strain LSv54 / DSM 12343), this protein is Large ribosomal subunit protein bL20.